The following is a 252-amino-acid chain: Hydroxyacylglutathione hydrolase (252 aa).

The Zn(2+) site is built by His-54, His-56, Asp-58, His-59, His-111, Asp-130, and His-170.

This sequence belongs to the metallo-beta-lactamase superfamily. Glyoxalase II family. In terms of assembly, monomer. It depends on Zn(2+) as a cofactor.

The catalysed reaction is an S-(2-hydroxyacyl)glutathione + H2O = a 2-hydroxy carboxylate + glutathione + H(+). It functions in the pathway secondary metabolite metabolism; methylglyoxal degradation; (R)-lactate from methylglyoxal: step 2/2. Its function is as follows. Thiolesterase that catalyzes the hydrolysis of S-D-lactoyl-glutathione to form glutathione and D-lactic acid. In Francisella tularensis subsp. novicida (strain U112), this protein is Hydroxyacylglutathione hydrolase.